Here is a 606-residue protein sequence, read N- to C-terminus: Thrombospondin-related anonymous protein (606 aa).

A signal peptide spans 1–24; the sequence is MKLLGNSKYFFVVLLLCISVFLNG. The VWFA domain occupies 43–228; it reads DLHILLDGSG…TMIKPFLSKV (186 aa). Residues 235–281 form the TSP type-1 domain; it reads VALCGKWEEWSECSTTCDNGTKIRKRKVLHPNCAGEMTAPCKVRDCP. Residues 301–541 form a disordered region; that stretch reads PVEPIEPAEP…SKKQSKSNNG (241 aa). 3 stretches are compositionally biased toward low complexity: residues 409–425, 440–450, and 459–479; these read ENPF…IIAP, ELPNNLPESPS, and PNDN…IPNK. Composition is skewed to basic and acidic residues over residues 487–504 and 516–532; these read NPYK…RSND and DKLE…ENKS. Residues 544 to 564 traverse the membrane as a helical segment; the sequence is IAGGIIGGLAIIGCIGVGYNF.

Interacts (via integrin-like A-domain) with Anopheles gambiae saglin/SG1F; the interaction probably promotes sporozoite invasion of salivary gland. Interacts (via integrin-like A-domain) with human AHSG; the interaction promotes sporozoite invasion of hepatocytes and formation of exoerythrocytic forms of parasites in human hepatoma HepG2 cells.

The protein localises to the cell membrane. Its subcellular location is the cytoplasm. Functionally, promotes parasite ability to invade host hepatocytes. Promotes parasite ability to invade mosquito salivary glands. Required for sporozoite gliding motility. This is Thrombospondin-related anonymous protein from Plasmodium berghei (strain Anka).